Here is a 238-residue protein sequence, read N- to C-terminus: Uridylate kinase (238 aa).

ATP is bound at residue 12–15 (KLSG). Residues 20-25 (GEKGFG) form an involved in allosteric activation by GTP region. Gly54 is a UMP binding site. ATP-binding residues include Gly55 and Arg59. UMP contacts are provided by residues Asp74 and 135–142 (TGSPYFST). ATP is bound by residues Asn163, Tyr169, and Asp172.

It belongs to the UMP kinase family. In terms of assembly, homohexamer.

The protein localises to the cytoplasm. It carries out the reaction UMP + ATP = UDP + ADP. It participates in pyrimidine metabolism; CTP biosynthesis via de novo pathway; UDP from UMP (UMPK route): step 1/1. Allosterically activated by GTP. Inhibited by UTP. Catalyzes the reversible phosphorylation of UMP to UDP. The protein is Uridylate kinase of Lactococcus lactis subsp. lactis (strain IL1403) (Streptococcus lactis).